Reading from the N-terminus, the 217-residue chain is Ribulose-phosphate 3-epimerase (217 aa).

Substrate is bound at residue serine 7. Residues histidine 32, aspartate 34, and histidine 65 each coordinate a divalent metal cation. Aspartate 34 functions as the Proton acceptor in the catalytic mechanism. Residues histidine 65, 141–144 (GFGG), 175–177 (DGG), and 197–198 (GS) contribute to the substrate site. Residue aspartate 175 participates in a divalent metal cation binding. The active-site Proton donor is the aspartate 175.

The protein belongs to the ribulose-phosphate 3-epimerase family. A divalent metal cation is required as a cofactor.

It carries out the reaction D-ribulose 5-phosphate = D-xylulose 5-phosphate. It functions in the pathway carbohydrate degradation. Its function is as follows. Catalyzes the reversible epimerization of D-ribulose 5-phosphate to D-xylulose 5-phosphate. This chain is Ribulose-phosphate 3-epimerase, found in Bacillus subtilis (strain 168).